The sequence spans 31 residues: Cyclotide cter-C (31 aa).

The segment at residues 1–31 is a cross-link (cyclopeptide (Gly-Asp)); that stretch reads GVPCAESCVWIPCTVTALLGCSCKDKVCYLD. Cystine bridges form between Cys-4–Cys-21, Cys-8–Cys-23, and Cys-13–Cys-28.

Contains 3 disulfide bonds. In terms of processing, this is a cyclic peptide.

Probably participates in a plant defense mechanism. The sequence is that of Cyclotide cter-C from Clitoria ternatea (Butterfly pea).